The primary structure comprises 125 residues: Cytochrome c2 (125 aa).

Positions 1 to 21 (MKAIKIAMVGAALVWSASAYA) are cleaved as a signal peptide. Residues 23-123 (GDPVKGEQVF…DVIAFLATQH (101 aa)) enclose the Cytochrome c domain. 4 residues coordinate heme c: Cys-35, Cys-38, His-39, and Met-101.

It belongs to the cytochrome c family. Post-translationally, binds 1 heme c group covalently per subunit.

Cytochrome c2 is found mainly in purple, non-sulfur, photosynthetic bacteria where it functions as the electron donor to the oxidized bacteriochlorophyll in the photophosphorylation pathway. However, it may also have a role in the respiratory chain and is found in some non-photosynthetic bacteria. In Rhodomicrobium vannielii (strain ATCC 17100 / DSM 162 / LMG 4299 / NCIMB 10020 / ATH 3.1.1), this protein is Cytochrome c2.